A 217-amino-acid polypeptide reads, in one-letter code: Octanoyltransferase (217 aa).

The BPL/LPL catalytic domain occupies 32–207 (DDSADEIWLV…HMIKKLNATQ (176 aa)). Residues 71–78 (RGGQVTYH), 138–140 (SLG), and 151–153 (GLA) contribute to the substrate site. Cys169 acts as the Acyl-thioester intermediate in catalysis.

It belongs to the LipB family.

It localises to the cytoplasm. The catalysed reaction is octanoyl-[ACP] + L-lysyl-[protein] = N(6)-octanoyl-L-lysyl-[protein] + holo-[ACP] + H(+). It participates in protein modification; protein lipoylation via endogenous pathway; protein N(6)-(lipoyl)lysine from octanoyl-[acyl-carrier-protein]: step 1/2. Functionally, catalyzes the transfer of endogenously produced octanoic acid from octanoyl-acyl-carrier-protein onto the lipoyl domains of lipoate-dependent enzymes. Lipoyl-ACP can also act as a substrate although octanoyl-ACP is likely to be the physiological substrate. This Pseudoalteromonas translucida (strain TAC 125) protein is Octanoyltransferase.